Here is a 626-residue protein sequence, read N- to C-terminus: ATP-dependent zinc metalloprotease FtsH (626 aa).

Topologically, residues 1-5 (MNFRN) are cytoplasmic. The helical transmembrane segment at 6–26 (LAIWLVIVAVLGGVFVVSQNS) threads the bilayer. Residues 27 to 98 (RTKSSSEISY…DVKFKSGSIS (72 aa)) lie on the Periplasmic side of the membrane. The chain crosses the membrane as a helical span at residues 99–119 (FLAILVQLLPILLVVGVWLFL). Topologically, residues 120-626 (MRQMQGGAKG…SPGAGASVTA (507 aa)) are cytoplasmic. 191–198 (GPPGTGKT) contacts ATP. His-413 contributes to the Zn(2+) binding site. The active site involves Glu-414. 2 residues coordinate Zn(2+): His-417 and Asp-491.

It in the central section; belongs to the AAA ATPase family. This sequence in the C-terminal section; belongs to the peptidase M41 family. Homohexamer. It depends on Zn(2+) as a cofactor.

It is found in the cell inner membrane. In terms of biological role, acts as a processive, ATP-dependent zinc metallopeptidase for both cytoplasmic and membrane proteins. Plays a role in the quality control of integral membrane proteins. Functionally, absence of FtsH leads to increased sigma-32 levels, which suggests, in analogy to E.coli, that sigma-32 is a substrate for FtsH. May play a role in the general stress response, as overexpression leads to improved resistance to salt stress. The protein is ATP-dependent zinc metalloprotease FtsH of Caulobacter vibrioides (strain NA1000 / CB15N) (Caulobacter crescentus).